Consider the following 330-residue polypeptide: Aspartate--ammonia ligase (330 aa).

This sequence belongs to the class-II aminoacyl-tRNA synthetase family. AsnA subfamily.

It is found in the cytoplasm. It carries out the reaction L-aspartate + NH4(+) + ATP = L-asparagine + AMP + diphosphate + H(+). It functions in the pathway amino-acid biosynthesis; L-asparagine biosynthesis; L-asparagine from L-aspartate (ammonia route): step 1/1. The chain is Aspartate--ammonia ligase from Streptococcus agalactiae serotype III (strain NEM316).